Here is a 159-residue protein sequence, read N- to C-terminus: Fimbrial protein EcpB (159 aa).

Residues 1 to 6 constitute a propeptide, leader sequence; it reads MYKQKG. An N-methylphenylalanine modification is found at F7. The helical transmembrane segment at 7–29 threads the bilayer; sequence FTLIELMIVIAIIGILAAIALPL. The cysteines at positions 137 and 156 are disulfide-linked.

Belongs to the N-Me-Phe pilin family.

It is found in the fimbrium. The protein localises to the membrane. The sequence is that of Fimbrial protein EcpB (ecpB) from Eikenella corrodens.